Reading from the N-terminus, the 162-residue chain is Protein FAM162B (162 aa).

A disordered region spans residues 26-69 (EATRRPAPALPPRGLPCYSSGGAPSNSGPQGHGEIHRVPTQRRP). A helical transmembrane segment spans residues 107–127 (VKACYIMIGLTIIACFAVIVS).

This sequence belongs to the UPF0389 family.

The protein resides in the membrane. This Homo sapiens (Human) protein is Protein FAM162B (FAM162B).